A 211-amino-acid chain; its full sequence is Guanylate kinase (211 aa).

The region spanning 7 to 185 is the Guanylate kinase-like domain; that stretch reads GLLIVVTGPS…AVAELRAIIM (179 aa). 14 to 21 is an ATP binding site; that stretch reads GPSAVGKG.

Belongs to the guanylate kinase family.

It localises to the cytoplasm. It carries out the reaction GMP + ATP = GDP + ADP. Functionally, essential for recycling GMP and indirectly, cGMP. The protein is Guanylate kinase of Symbiobacterium thermophilum (strain DSM 24528 / JCM 14929 / IAM 14863 / T).